Here is an 800-residue protein sequence, read N- to C-terminus: Phenylalanine--tRNA ligase beta subunit (800 aa).

Positions 39-154 (TKEIKNLVVG…TEVKPGTDAL (116 aa)) constitute a tRNA-binding domain. In terms of domain architecture, B5 spans 408–483 (CFVTPIDISV…RIYGYDKIPS (76 aa)). 4 residues coordinate Mg(2+): Asp461, Asp467, Glu470, and Glu471. The region spanning 708 to 800 (PRFPGVSRDI…ALKSEGATIR (93 aa)) is the FDX-ACB domain.

The protein belongs to the phenylalanyl-tRNA synthetase beta subunit family. Type 1 subfamily. In terms of assembly, tetramer of two alpha and two beta subunits. Mg(2+) serves as cofactor.

It is found in the cytoplasm. The catalysed reaction is tRNA(Phe) + L-phenylalanine + ATP = L-phenylalanyl-tRNA(Phe) + AMP + diphosphate + H(+). This chain is Phenylalanine--tRNA ligase beta subunit, found in Staphylococcus saprophyticus subsp. saprophyticus (strain ATCC 15305 / DSM 20229 / NCIMB 8711 / NCTC 7292 / S-41).